The following is a 221-amino-acid chain: Flagellar L-ring protein 2 (221 aa).

The signal sequence occupies residues 1–16 (MKRFLILTPMVLALCG). Cysteine 17 carries the N-palmitoyl cysteine lipid modification. Cysteine 17 carries S-diacylglycerol cysteine lipidation.

This sequence belongs to the FlgH family. The basal body constitutes a major portion of the flagellar organelle and consists of four rings (L,P,S, and M) mounted on a central rod.

The protein localises to the cell outer membrane. It is found in the bacterial flagellum basal body. Its function is as follows. Assembles around the rod to form the L-ring and probably protects the motor/basal body from shearing forces during rotation. This chain is Flagellar L-ring protein 2, found in Yersinia pseudotuberculosis serotype I (strain IP32953).